The chain runs to 349 residues: Putative transport protein YhhT (349 aa).

Residues M1–G10 are Cytoplasmic-facing. Residues M11 to A31 form a helical membrane-spanning segment. A topological domain (periplasmic) is located at residue D32. The chain crosses the membrane as a helical span at residues I33–W53. Residues F54–P62 lie on the Cytoplasmic side of the membrane. A helical membrane pass occupies residues V63–L83. Residues A84–T142 lie on the Periplasmic side of the membrane. The chain crosses the membrane as a helical span at residues G143 to F163. Over E164–G208 the chain is Cytoplasmic. Residues V209–L229 traverse the membrane as a helical segment. At A230–N234 the chain is on the periplasmic side. Residues Y235–F255 form a helical membrane-spanning segment. The Cytoplasmic segment spans residues N256 to G257. A helical transmembrane segment spans residues V258 to I278. The Periplasmic segment spans residues L279–T292. A helical membrane pass occupies residues M293–L313. The Cytoplasmic portion of the chain corresponds to S314 to G349.

The protein belongs to the autoinducer-2 exporter (AI-2E) (TC 2.A.86) family.

It is found in the cell inner membrane. In Escherichia coli O157:H7, this protein is Putative transport protein YhhT (yhhT).